Here is a 601-residue protein sequence, read N- to C-terminus: DNA ligase (601 aa).

An ATP-binding site is contributed by D258. The active-site N6-AMP-lysine intermediate is K260. Residues R265, R280, E310, F350, R427, and K433 each coordinate ATP. The tract at residues D568 to V601 is disordered.

Belongs to the ATP-dependent DNA ligase family. Requires Mg(2+) as cofactor.

It carries out the reaction ATP + (deoxyribonucleotide)n-3'-hydroxyl + 5'-phospho-(deoxyribonucleotide)m = (deoxyribonucleotide)n+m + AMP + diphosphate.. DNA ligase that seals nicks in double-stranded DNA during DNA replication, DNA recombination and DNA repair. This Saccharolobus islandicus (strain L.S.2.15 / Lassen #1) (Sulfolobus islandicus) protein is DNA ligase.